We begin with the raw amino-acid sequence, 355 residues long: Probable butyrate kinase (355 aa).

Belongs to the acetokinase family.

The protein resides in the cytoplasm. The enzyme catalyses butanoate + ATP = butanoyl phosphate + ADP. This Listeria monocytogenes serotype 4b (strain CLIP80459) protein is Probable butyrate kinase.